A 152-amino-acid polypeptide reads, in one-letter code: Protein SprT-like (152 aa).

In terms of domain architecture, SprT-like spans 7 to 147 (QRLVEEVSLQ…CGKCKGKLKP (141 aa)). His-67 contributes to the Zn(2+) binding site. The active site involves Glu-68. His-71 is a binding site for Zn(2+).

Belongs to the SprT family. It depends on Zn(2+) as a cofactor.

The protein localises to the cytoplasm. This is Protein SprT-like from Bacillus cereus (strain ATCC 14579 / DSM 31 / CCUG 7414 / JCM 2152 / NBRC 15305 / NCIMB 9373 / NCTC 2599 / NRRL B-3711).